The chain runs to 296 residues: tRNA uridine(34) hydroxylase (296 aa).

A Rhodanese domain is found at 130–225 (RGEDVVFFDG…YGEAYGDRGL (96 aa)). Cysteine 185 functions as the Cysteine persulfide intermediate in the catalytic mechanism.

Belongs to the TrhO family.

It carries out the reaction uridine(34) in tRNA + AH2 + O2 = 5-hydroxyuridine(34) in tRNA + A + H2O. In terms of biological role, catalyzes oxygen-dependent 5-hydroxyuridine (ho5U) modification at position 34 in tRNAs. This chain is tRNA uridine(34) hydroxylase, found in Kocuria rhizophila (strain ATCC 9341 / DSM 348 / NBRC 103217 / DC2201).